Consider the following 182-residue polypeptide: Nucleoid-associated protein At2g24020, chloroplastic (182 aa).

Residues 1-48 (MASMAATTNFTKSMLFPFSHVSGNASLNSQRRTWPKQYKSKNGYRSLR) constitute a chloroplast transit peptide.

It belongs to the YbaB/EbfC family. As to quaternary structure, homodimer. Interacts with ALB3 and ALB4.

The protein localises to the plastid. It localises to the chloroplast stroma. Its function is as follows. Participates with ALB4 in thylakoid protein targeting. May function with specific subset of thylakoidal proteins. Binds to DNA and alters its conformation. May be involved in regulation of gene expression, nucleoid organization and DNA protection. This is Nucleoid-associated protein At2g24020, chloroplastic from Arabidopsis thaliana (Mouse-ear cress).